Consider the following 598-residue polypeptide: Serine/threonine-protein kinase PLK1 (598 aa).

A disordered region spans residues 1–26 (MAQVAGKKLTVAPEAGKPPGIPGSSS). Phosphoserine occurs at positions 25 and 26. A Protein kinase domain is found at 44–296 (YLRGRFLGKG…IDDLLNDEFF (253 aa)). Residues 50–58 (LGKGGFAKC), Lys-73, and Glu-122 each bind ATP. Asp-167 functions as the Proton acceptor in the catalytic mechanism. Residues 169–172 (KLGN) and Asp-185 each bind ATP. The interval 185–212 (DFGLATKVEYDGERKKTLCGTPNYIAPE) is activation loop. Position 201 is a phosphothreonine (Thr-201). Residues Ser-260 and Ser-326 each carry the phosphoserine; by autocatalysis modification. The short motif at 328 to 331 (RKPL) is the D-box that targets the protein for proteasomal degradation in anaphase element. The interval 336 to 360 (KGQDSPLVEKQSVPAKEEEMQQPES) is disordered. Ser-340 bears the Phosphoserine mark. The POLO box 1 domain occupies 404–482 (WVSKWVDYSD…LKYFRNYMSE (79 aa)). The tract at residues 487-501 (AGANITPREGDELAR) is linker. The region spanning 504 to 586 (FLRTWFRTRS…ARTMVEKLQS (83 aa)) is the POLO box 2 domain. The tract at residues 532 to 534 (HTK) is important for interaction with phosphorylated proteins.

This sequence belongs to the protein kinase superfamily. Ser/Thr protein kinase family. As to quaternary structure, interacts with plk1 and kif2a. Interacts with fbxo5. Post-translationally, activated by phosphorylation on Thr-201 during M phase. In terms of processing, protein levels are down-regulated by proteasomal degradation in anaphase.

The protein localises to the nucleus. It localises to the cytoplasm. The protein resides in the cytoskeleton. It is found in the microtubule organizing center. Its subcellular location is the centrosome. The protein localises to the spindle. It localises to the midbody. The catalysed reaction is L-seryl-[protein] + ATP = O-phospho-L-seryl-[protein] + ADP + H(+). The enzyme catalyses L-threonyl-[protein] + ATP = O-phospho-L-threonyl-[protein] + ADP + H(+). Functionally, plays multiple essential roles during mitosis. Phosphorylates the N-terminal domain of cdc25, which leads to cyclin b-cdc2 activation and mitotic entry. Also required for organization of bipolar spindles, and for exit from mitosis. Phosphorylates tpx2. The chain is Serine/threonine-protein kinase PLK1 (plk1) from Xenopus tropicalis (Western clawed frog).